The sequence spans 183 residues: Peptidoglycan recognition protein 1 (183 aa).

Positions 1-17 (MLFAWAPFPALLGLADS) are cleaved as a signal peptide. Intrachain disulfides connect C18–C142, C34–C79, and C55–C61. The N-acetylmuramoyl-L-alanine amidase domain maps to 40 to 168 (KPVRYVVISH…RDVQSTLSPG (129 aa)).

It belongs to the N-acetylmuramoyl-L-alanine amidase 2 family. In terms of tissue distribution, expressed in all regions of the brain.

It localises to the secreted. The protein resides in the cytoplasmic granule. Innate immunity protein that plays several important functions in antimicrobial and antitumor defense systems. Acts as a pattern receptor that binds to murein peptidoglycans (PGN) of Gram-positive bacteria and thus provides bactericidal activity. Forms an equimolar complex with heat shock protein HSPA1A and induces programmed cell death through apoptosis and necroptosis in tumor cell lines by activating the TNFR1 receptor on the target cell membrane. In addition, acts in complex with the Ca(2+)-binding protein S100A4 as a chemoattractant able to induce lymphocyte movement. Mechanistically, this complex acts as a ligand of the chemotactic receptors CCR5 and CXCR3 which are present on the cells of the immune system. Promotes also the activation of lymphocytes that become able to kill virus-infected cells as well as tumor cells by modulating the spectrum of their target-cell specificity. Induction of cytotoxicity on monocyte surface requires interaction with TREM1 receptor. The sequence is that of Peptidoglycan recognition protein 1 (Pglyrp1) from Rattus norvegicus (Rat).